A 174-amino-acid chain; its full sequence is Trypsin inhibitor (174 aa).

2 disulfide bridges follow: Cys40–Cys86 and Cys131–Cys140.

Belongs to the protease inhibitor I3 (leguminous Kunitz-type inhibitor) family. Heterodimer of an alpha and a beta chain linked by a disulfide bond.

Its function is as follows. Inhibits trypsin and chymotrypsin with a 1:1 stoichiometry, with dissociation constants of 1.56 nM and 120 nM respectively. Inhibits plasma kallikrein, factor XIIa and plasmin with dissociation constants of 5.0 nM, 150 nM and 18 nM respectively. Does not inhibit factor Xa, thrombin, tissue kallikrein or cysteine proteinases such as papain and bromelain. This is Trypsin inhibitor from Enterolobium contortisiliquum (Pacara earpod tree).